The primary structure comprises 125 residues: Large ribosomal subunit protein bL12 (125 aa).

As to quaternary structure, homodimer. Part of the ribosomal stalk of the 50S ribosomal subunit. Forms a multimeric L10(L12)X complex, where L10 forms an elongated spine to which 2 to 4 L12 dimers bind in a sequential fashion. Binds GTP-bound translation factors. Two isoforms seem to exist. One is probably dimethylated on Lys-69 and monomethylated on Lys-86 while the other is probably acetylated or trimethylated on both Lys-86 and Lys-89.

Its function is as follows. Forms part of the ribosomal stalk which helps the ribosome interact with GTP-bound translation factors. Is thus essential for accurate translation. The chain is Large ribosomal subunit protein bL12 from Rhodopseudomonas palustris (strain ATCC BAA-98 / CGA009).